A 195-amino-acid chain; its full sequence is MAAAAGRSIVFVTGNAKKLEEVVQILGDKFPCKLVAKKIDLPEYQGEPDEISIQKCREAAKQIQGPVIVEDTCLCFNALGGLPGPYIKWFLEKIKPEGLHRMLEGFEDKSAIALCTFAYCNGNPDDTVLLFRGKTLGQIVLPRGPRDFGWDPCFQPDGFQQTYAELPKEVKNTISHRYRALKEMSDYFIQNGTKV.

Residue 13-18 (TGNAKK) participates in ITP binding. Residue Glu-43 coordinates Mg(2+). Residues Lys-55, 71–72 (DT), Lys-88, 148–151 (FGWD), Lys-171, and 176–177 (HR) contribute to the ITP site.

This sequence belongs to the HAM1 NTPase family. As to quaternary structure, homodimer. The cofactor is Mg(2+). Mn(2+) serves as cofactor.

It localises to the cytoplasm. The catalysed reaction is ITP + H2O = IMP + diphosphate + H(+). It carries out the reaction dITP + H2O = dIMP + diphosphate + H(+). It catalyses the reaction XTP + H2O = XMP + diphosphate + H(+). The enzyme catalyses N(6)-hydroxy-dATP + H2O = N(6)-hydroxy-dAMP + diphosphate + H(+). In terms of biological role, pyrophosphatase that hydrolyzes the non-canonical purine nucleotides inosine triphosphate (ITP), deoxyinosine triphosphate (dITP) as well as 2'-deoxy-N-6-hydroxylaminopurine triphosphate (dHAPTP) and xanthosine 5'-triphosphate (XTP) to their respective monophosphate derivatives. The enzyme does not distinguish between the deoxy- and ribose forms. Probably excludes non-canonical purines from RNA and DNA precursor pools, thus preventing their incorporation into RNA and DNA and avoiding chromosomal lesions. The sequence is that of Inosine triphosphate pyrophosphatase (itpa) from Xenopus laevis (African clawed frog).